Reading from the N-terminus, the 165-residue chain is Chorismate pyruvate-lyase (165 aa).

Met35, Arg77, Leu115, and Glu156 together coordinate substrate.

The protein belongs to the UbiC family. As to quaternary structure, monomer.

The protein resides in the cytoplasm. The enzyme catalyses chorismate = 4-hydroxybenzoate + pyruvate. The protein operates within cofactor biosynthesis; ubiquinone biosynthesis. In terms of biological role, removes the pyruvyl group from chorismate, with concomitant aromatization of the ring, to provide 4-hydroxybenzoate (4HB) for the ubiquinone pathway. The polypeptide is Chorismate pyruvate-lyase (Escherichia coli O127:H6 (strain E2348/69 / EPEC)).